An 884-amino-acid chain; its full sequence is MGARCRSFSALLLLLQVSSWLCQELEPESCSPGFSSEVYTFPVPERHLERGHVLGRVRFEGCTGRPRTAFFSEDSRFKVATDGTITVKRHLKLHKLETSFLVRARDSSHRELSTKVTLKSMGHHHHRHHHRDPASESNPELLMFPSVYPGLRRQKRDWVIPPISCPENEKGEFPKNLVQIKSNRDKETKVFYSITGQGADKPPVGVFIIERETGWLKVTQPLDREAIAKYILYSHAVSSNGEAVEDPMEIVITVTDQNDNRPEFTQEVFEGSVAEGAVPGTSVMKVSATDADDDVNTYNAAIAYTIVSQDPELPHKNMFTVNRDTGVISVLTSGLDRESYPTYTLVVQAADLQGEGLSTTAKAVITVKDINDNAPVFNPSTYQGQVPENEVNARIATLKVTDDDAPNTPAWKAVYTVVNDPDQQFVVVTDPTTNDGILKTAKGLDFEAKQQYILHVRVENEEPFEGSLVPSTATVTVDVVDVNEAPIFMPAERRVEVPEDFGVGQEITSYTAREPDTFMDQKITYRIWRDTANWLEINPETGAIFTRAEMDREDAEHVKNSTYVALIIATDDGSPIATGTGTLLLVLLDVNDNAPIPEPRNMQFCQRNPQPHIITILDPDLPPNTSPFTAELTHGASVNWTIEYNDAAQESLILQPRKDLEIGEYKIHLKLADNQNKDQVTTLDVHVCDCEGTVNNCMKAGIVAAGLQVPAILGILGGILALLILILLLLLFLRRRTVVKEPLLPPDDDTRDNVYYYDEEGGGEEDQDFDLSQLHRGLDARPEVTRNDVAPTLMSVPQYRPRPANPDEIGNFIDENLKAADSDPTAPPYDSLLVFDYEGSGSEAASLSSLNSSESDQDQDYDYLNEWGNRFKKLADMYGGGEDD.

An N-terminal signal peptide occupies residues 1–23 (MGARCRSFSALLLLLQVSSWLCQ). A propeptide spanning residues 24-156 (ELEPESCSPG…VYPGLRRQKR (133 aa)) is cleaved from the precursor. Positions 119–139 (KSMGHHHHRHHHRDPASESNP) are disordered. Residues 121–131 (MGHHHHRHHHR) show a composition bias toward basic residues. Cadherin domains lie at 157-264 (DWVI…RPEF), 265-377 (TQEV…APVF), 378-488 (NPST…APIF), 489-595 (MPAE…DNAP), and 596-699 (IPEP…NCMK). At 157–709 (DWVIPPISCP…AGIVAAGLQV (553 aa)) the chain is on the extracellular side. Position 259 (Asp259) interacts with Ca(2+). O-linked (Man...) serine glycans are attached at residues Ser282 and Ser287. Asp290 provides a ligand contact to Ca(2+). 4 O-linked (Man...) threonine glycosylation sites follow: Thr360, Thr472, Thr474, and Thr511. An N-linked (GlcNAc...) asparagine glycan is attached at Asn560. 3 O-linked (Man...) threonine glycosylation sites follow: Thr578, Thr580, and Thr582. The N-linked (GlcNAc...) asparagine glycan is linked to Asn639. A helical membrane pass occupies residues 710–733 (PAILGILGGILALLILILLLLLFL). Over 734–884 (RRRTVVKEPL…ADMYGGGEDD (151 aa)) the chain is Cytoplasmic. Positions 749–808 (DTRDNVYYYDEEGGGEEDQDFDLSQLHRGLDARPEVTRNDVAPTLMSVPQYRPRPANPDE) are disordered. Phosphotyrosine; by SRC is present on residues Tyr755, Tyr756, and Tyr757. The segment covering 757-769 (YDEEGGGEEDQDF) has biased composition (acidic residues). The required for binding CTNND1 and PSEN1 stretch occupies residues 760 to 771 (EGGGEEDQDFDL). At Ser772 the chain carries Phosphoserine. Over residues 776 to 786 (RGLDARPEVTR) the composition is skewed to basic and acidic residues. Phosphoserine occurs at positions 795, 840, 842, and 848. Residues 813–884 (IDENLKAADS…ADMYGGGEDD (72 aa)) form a required for binding alpha, beta and gamma catenins region.

As to quaternary structure, homodimer; disulfide-linked. Component of an E-cadherin/ catenin adhesion complex composed of at least E-cadherin/CDH1, beta-catenin/CTNNB1 or gamma-catenin/JUP, and potentially alpha-catenin/CTNNA1; the complex is located to adherens junctions. Found in a complex composed of CDH1, RAP1A and PKP3; PKP3 acts as a scaffold protein within the complex, the complex is required for CDH1 localization to mature desmosome cell junctions. Interacts with the TRPV4 and CTNNB1 complex. Interacts with CTNND1. The stable association of CTNNA1 is controversial as CTNNA1 was shown not to bind to F-actin when assembled in the complex. Alternatively, the CTNNA1-containing complex may be linked to F-actin by other proteins such as LIMA1. Interaction with PSEN1, cleaves CDH1 resulting in the disassociation of cadherin-based adherens junctions (CAJs). Interacts with AJAP1 and DLGAP5. Interacts with TBC1D2. Interacts with LIMA1. Interacts with CAV1. Interacts with PIP5K1C. Interacts with RAB8B. Interacts with DDR1; this stabilizes CDH1 at the cell surface and inhibits its internalization. Interacts with RAPGEF2. Interacts with KLRG1. Forms a ternary complex composed of ADAM10, CADH1 and EPHA4; within the complex, CADH1 is cleaved by ADAM10 which disrupts adherens junctions. Interacts with SPEF1. Interacts with CTNNB1 and PKP2. Interacts with AMOTL2; the interaction may facilitate binding of radial actin fibers to cell junction complexes. Interacts with DSG3; the interaction is required for CDH1 localization to developing adherens junctions. During apoptosis or with calcium influx, cleaved by a membrane-bound metalloproteinase (ADAM10), PS1/gamma-secretase and caspase-3. Processing by the metalloproteinase, induced by calcium influx, causes disruption of cell-cell adhesion and the subsequent release of beta-catenin into the cytoplasm. The residual membrane-tethered cleavage product is rapidly degraded via an intracellular proteolytic pathway. Cleavage by caspase-3 releases the cytoplasmic tail resulting in disintegration of the actin microfilament system. The gamma-secretase-mediated cleavage promotes disassembly of adherens junctions. During development of the cochlear organ of Corti, cleavage by ADAM10 at adherens junctions promotes pillar cell separation. In terms of processing, O-glycosylated. O-manosylated by TMTC1, TMTC2, TMTC3 or TMTC4. Ser-287 and Thr-511 are O-manosylated by TMTC2 or TMTC4 but not TMTC1 or TMTC3. Post-translationally, N-glycosylation at Asn-639 is essential for expression, folding and trafficking. Addition of bisecting N-acetylglucosamine by MGAT3 modulates its cell membrane location. Ubiquitinated by a SCF complex containing SKP2, which requires prior phosphorylation by CK1/CSNK1A1. Ubiquitinated by CBLL1/HAKAI, requires prior phosphorylation at Tyr-756. As to expression, expressed in inner and outer pillar cells of the organ of Corti (at protein level). Expressed in granuloma macrophages (at protein level). Expressed in the epidermal keratinocytes of the skin from birth (at protein level). Expressed in non-neural epithelial tissues.

Its subcellular location is the cell junction. It localises to the adherens junction. The protein resides in the cell membrane. It is found in the endosome. The protein localises to the golgi apparatus. Its subcellular location is the trans-Golgi network. It localises to the cytoplasm. The protein resides in the desmosome. Its function is as follows. Cadherins are calcium-dependent cell adhesion proteins. They preferentially interact with themselves in a homophilic manner in connecting cells; cadherins may thus contribute to the sorting of heterogeneous cell types. CDH1 is involved in mechanisms regulating cell-cell adhesions, mobility and proliferation of epithelial cells. Promotes organization of radial actin fiber structure and cellular response to contractile forces, via its interaction with AMOTL2 which facilitates anchoring of radial actin fibers to CDH1 junction complexes at the cell membrane. Plays a role in the early stages of desmosome cell-cell junction formation via facilitating the recruitment of DSG2 and DSP to desmosome plaques. Has a potent invasive suppressor role. It is a ligand for integrin alpha-E/beta-7. In terms of biological role, E-Cad/CTF2 promotes non-amyloidogenic degradation of Abeta precursors. Has a strong inhibitory effect on APP C99 and C83 production. Functionally, (Microbial infection) Does not function as a receptor for L.monocytogenes internalin A (InlA); mutating a single surface-exposed residue confers receptor activity to this protein and promotes uptake of the bacteria. This Mus musculus (Mouse) protein is Cadherin-1 (Cdh1).